The chain runs to 1084 residues: Siderophore biosynthesis regulatory protein URBS1 (1084 aa).

Disordered regions lie at residues Met-1–Ser-164, Ala-245–Tyr-283, and Arg-300–Arg-337. Over residues Gln-23 to Ala-51 the composition is skewed to low complexity. Composition is skewed to polar residues over residues Ser-97–Thr-106 and Arg-128–Gln-141. A compositionally biased stretch (low complexity) spans Pro-150–Ser-164. The span at Ala-245–Arg-260 shows a compositional bias: basic and acidic residues. A GATA-type 1 zinc finger spans residues Cys-338–Cys-362. Disordered regions lie at residues His-372–Asp-405 and Val-442–Asp-472. Residues Arg-373–Ser-385 are compositionally biased toward polar residues. A GATA-type 2 zinc finger spans residues Cys-482 to Cys-506. Disordered regions lie at residues Ile-559–Ala-595, Arg-643–Asp-679, Thr-692–Ser-803, Glu-841–Asn-940, Ala-953–Trp-1019, and Ala-1040–Thr-1084. Basic and acidic residues-rich tracts occupy residues Arg-650–Ser-659 and Arg-715–Ser-725. Over residues Pro-752–Pro-781 the composition is skewed to basic residues. Positions Arg-875 to Ala-888 are enriched in basic and acidic residues. Over residues Ser-961 to Ala-970 the composition is skewed to polar residues. A compositionally biased stretch (low complexity) spans Pro-1070–Thr-1084.

The protein localises to the nucleus. Its function is as follows. Involved in the regulation of secreted ferrichrome-type siderophores. Acts directly or indirectly to repress the biosynthesis of siderophores. This is Siderophore biosynthesis regulatory protein URBS1 (URBS1) from Mycosarcoma maydis (Corn smut fungus).